An 878-amino-acid chain; its full sequence is MSKVHNSEYIQELSVDNTSYKIYDINKAASDIDLPLKKLPYSLRVLFENVLRSNGSKQSLLVFKEWLKTKKSDAEIDFMPARVLMQDFTGVPAIVDLAAMRDAMKKIGGDPLKINPLIPVDLVIDHSVSVDSYAAKDSFNKNVQMEMKRNIERYAFLKWGQQAFNNFKVVPPGTGICHQVNLEYLAKVVWHKDGTLYPDSLVGTDSHTTMVNGLSVLGWGVGGIEAEAAMLGQPLTMILPEVIGVKLTGKLTGIATATDLVLTVTEMLRKKKVVGKFVEFFGEGLKNLMIADRATISNMSPEYGATCGFFPIDQETIKYLELTGREKTQIRLVEQYATEQNLWYDFEHAVEYTEVLELDLSMVHGSLAGPKRPQDRVNLNDVASNFKYELPNFALDNKDIDKKYAVANQNYEIGNGDVVIAAITSCTNTSNPSVMIGAALLAKKALEHGLKVKPWVKTSLAPGSKVVTEYLKLSGLDKYLDELGFNLVGYGCTTCIGNSGPLNPEIEETINKNGLVVASVLSGNRNFEGRINPLTKASYLGSPILVVAYALSGTLNIDLTNMPIGENIYLKDLWPSKEEIDEVIANSINSSMFIEKYSDIFSGTKEWKDLQVTNSSTYNWNKNSTYINNPPYFKDIGSKNNIQDIKSAKILAILGDSITTDHISPAGSISKTSPAAKYLTDHHIEPLDFNSYGSRRGNHEVMMRGTFANIRIKNEMCKGVEGGFTINQLNGTQQTIYDAAMDYKAHDVSVVIFAGKEYGSGSSRDWAAKGPGLLGVKAVIAESFERIHRSNLVGMGILPLTFTGNNTRLDLKLDGSETIDITGLSENISSYHPVKCVIKKQTGAIRTIDLILQIFTDNEINYIKHGSIMHFVVESLKG.

Positions 426, 492, and 495 each coordinate [4Fe-4S] cluster.

This sequence belongs to the aconitase/IPM isomerase family. As to quaternary structure, monomer. It depends on [4Fe-4S] cluster as a cofactor.

It catalyses the reaction citrate = D-threo-isocitrate. The catalysed reaction is (2S,3R)-3-hydroxybutane-1,2,3-tricarboxylate = 2-methyl-cis-aconitate + H2O. It participates in carbohydrate metabolism; tricarboxylic acid cycle; isocitrate from oxaloacetate: step 2/2. The protein operates within organic acid metabolism; propanoate degradation. Involved in the catabolism of short chain fatty acids (SCFA) via the tricarboxylic acid (TCA)(acetyl degradation route) and probably the 2-methylcitrate cycle I (propionate degradation route). Catalyzes the reversible isomerization of citrate to isocitrate via cis-aconitate. Could catalyze the hydration of 2-methyl-cis-aconitate to yield (2R,3S)-2-methylisocitrate. The apo form of AcnA functions as a RNA-binding regulatory protein. This chain is Aconitate hydratase A (acnA), found in Rickettsia conorii (strain ATCC VR-613 / Malish 7).